Here is a 3748-residue protein sequence, read N- to C-terminus: Intermembrane lipid transfer protein VPS13C (3748 aa).

Positions 3–115 (LESVVADLLN…SLQDIKQKEL (113 aa)) constitute a Chorein N-terminal domain. Ser-132 carries the post-translational modification Phosphoserine. Thr-613 is modified (phosphothreonine). Ser-618 is subject to Phosphoserine. Thr-623 carries the phosphothreonine modification. A phosphoserine mark is found at Ser-736, Ser-841, Ser-871, and Ser-873. The FFAT motif lies at 876–882 (EFFDAED). Thr-1968 is modified (phosphothreonine). Residues Ser-1974 and Ser-2442 each carry the phosphoserine modification. Positions 2410–3304 (DYSLKDRAPF…IQQDIDALNT (895 aa)) are required for late endosome/lysosome localization. One can recognise an SHR-BD domain in the interval 2760–3012 (ELSVFSPYWL…LFAWADPTGI (253 aa)). A required for lipid droplet localization region spans residues 3305–3748 (ELMESSMTDM…VKLLRPQGPS (444 aa)). Omega-N-methylarginine occurs at positions 3514 and 3521. Lys-3533 is subject to N6-acetyllysine.

The protein belongs to the VPS13 family.

It is found in the mitochondrion outer membrane. The protein resides in the lipid droplet. The protein localises to the endoplasmic reticulum membrane. Its subcellular location is the lysosome membrane. It localises to the late endosome membrane. Functionally, mediates the transfer of lipids between membranes at organelle contact sites. Necessary for proper mitochondrial function and maintenance of mitochondrial transmembrane potential. Involved in the regulation of PINK1/PRKN-mediated mitophagy in response to mitochondrial depolarization. The polypeptide is Intermembrane lipid transfer protein VPS13C (Mus musculus (Mouse)).